We begin with the raw amino-acid sequence, 49 residues long: Large ribosomal subunit protein bL33 (49 aa).

The protein belongs to the bacterial ribosomal protein bL33 family.

The sequence is that of Large ribosomal subunit protein bL33 from Syntrophotalea carbinolica (strain DSM 2380 / NBRC 103641 / GraBd1) (Pelobacter carbinolicus).